Consider the following 216-residue polypeptide: Ribosomal RNA small subunit methyltransferase G (216 aa).

Residues Gly-83, Met-88, 134–135 (VE), and Arg-149 contribute to the S-adenosyl-L-methionine site.

This sequence belongs to the methyltransferase superfamily. RNA methyltransferase RsmG family.

Its subcellular location is the cytoplasm. The enzyme catalyses guanosine(527) in 16S rRNA + S-adenosyl-L-methionine = N(7)-methylguanosine(527) in 16S rRNA + S-adenosyl-L-homocysteine. Its function is as follows. Specifically methylates the N7 position of guanine in position 527 of 16S rRNA. The chain is Ribosomal RNA small subunit methyltransferase G from Pseudomonas entomophila (strain L48).